Here is a 423-residue protein sequence, read N- to C-terminus: Gamma-glutamyl phosphate reductase (423 aa).

Belongs to the gamma-glutamyl phosphate reductase family.

Its subcellular location is the cytoplasm. The catalysed reaction is L-glutamate 5-semialdehyde + phosphate + NADP(+) = L-glutamyl 5-phosphate + NADPH + H(+). It functions in the pathway amino-acid biosynthesis; L-proline biosynthesis; L-glutamate 5-semialdehyde from L-glutamate: step 2/2. Functionally, catalyzes the NADPH-dependent reduction of L-glutamate 5-phosphate into L-glutamate 5-semialdehyde and phosphate. The product spontaneously undergoes cyclization to form 1-pyrroline-5-carboxylate. The protein is Gamma-glutamyl phosphate reductase of Magnetococcus marinus (strain ATCC BAA-1437 / JCM 17883 / MC-1).